The primary structure comprises 168 residues: Shikimate kinase (168 aa).

An ATP-binding site is contributed by 10–15 (GVGKTT). Thr14 serves as a coordination point for Mg(2+). Residues Asp32, Arg56, and Gly77 each contribute to the substrate site. Arg115 contacts ATP. Position 133 (Arg133) interacts with substrate.

It belongs to the shikimate kinase family. As to quaternary structure, monomer. Mg(2+) is required as a cofactor.

It localises to the cytoplasm. It catalyses the reaction shikimate + ATP = 3-phosphoshikimate + ADP + H(+). It functions in the pathway metabolic intermediate biosynthesis; chorismate biosynthesis; chorismate from D-erythrose 4-phosphate and phosphoenolpyruvate: step 5/7. In terms of biological role, catalyzes the specific phosphorylation of the 3-hydroxyl group of shikimic acid using ATP as a cosubstrate. The polypeptide is Shikimate kinase (Macrococcus caseolyticus (strain JCSC5402) (Macrococcoides caseolyticum)).